Consider the following 305-residue polypeptide: MGTTGARPSRRAVLTAAAGAAVAGIPLGGSTAFAAPRGNPDVLRQLRALEQEHSARLGVYARDTATGRTVLHRAEERFPMCSVFKTLAVAAVLRDLDRDGEFLATRLFYTEQEVKDSGFGPVTGLPENLAAGMTVERLCAAAICQSDNAAANLLLRELGGPEAVTRFCRSVGDRTTRLDRWEPELNSAEPGRLTDTTTPRAIGATYGELVLGDALAPRDRERLTGWLLANTTSTERFRKGLPADWTLGDKTGGGAYGTNNDAGVTWPPHRPPVVMVVLTTHDRPDAVADNPLVAKTAALLASALG.

A signal peptide (tat-type signal) is located at residues Met-1–Ala-34. The active-site Acyl-ester intermediate is Ser-82. Position 250-252 (Lys-250–Gly-252) interacts with substrate.

Belongs to the class-A beta-lactamase family. Post-translationally, predicted to be exported by the Tat system. The position of the signal peptide cleavage has not been experimentally proven.

It carries out the reaction a beta-lactam + H2O = a substituted beta-amino acid. The protein is Beta-lactamase of Streptomyces lavendulae.